The primary structure comprises 792 residues: Kinesin-related protein 2 (792 aa).

Disordered stretches follow at residues 22-50 and 162-183; these read TINS…PPST and NNIN…SPVQ. Residues 34–50 show a composition bias toward polar residues; sequence ASSSSQSNDRISYPPST. Residues 284-423 adopt a coiled-coil conformation; it reads RLSLSIQDIK…LEKSRSDEKV (140 aa). One can recognise a Kinesin motor domain in the interval 437 to 781; the sequence is NIRVFCRIRP…LRFAAKVNSC (345 aa). 528–535 serves as a coordination point for ATP; that stretch reads GQTGSGKT.

The protein belongs to the TRAFAC class myosin-kinesin ATPase superfamily. Kinesin family. NCD subfamily.

The protein resides in the nucleus. It is found in the cytoplasm. Its subcellular location is the cytoskeleton. It localises to the spindle. In terms of biological role, microtubule-dependent motor that is probably involved in microtubule organization in the mitotic spindle. This Dictyostelium discoideum (Social amoeba) protein is Kinesin-related protein 2 (kif2).